The chain runs to 160 residues: Anaerobic nitrite reductase MHB1 (160 aa).

A Globin domain is found at 8-157; the sequence is GFTEEQEALV…LVNAIKSEMK (150 aa). The Homodimerization signature appears at 41-45; sequence EIAPS. Heme b is bound by residues serine 51, lysine 65, histidine 69, lysine 99, and histidine 104. A Homodimerization motif is present at residues 111–123; sequence DEHFEVTKFALLE.

The protein belongs to the plant globin family. Homodimer. Requires heme b as cofactor. In terms of tissue distribution, root specific.

It is found in the nucleus matrix. It localises to the cytoplasm. The catalysed reaction is Fe(III)-heme b-[protein] + nitric oxide + H2O = Fe(II)-heme b-[protein] + nitrite + 2 H(+). Phytoglobin that reduces nitrite to nitric oxide (NO) under anoxic conditions (e.g. during flooding or in waterlogged soil) and upon root nodulation. Required for general plant development and during nodulation, especially for the onset of symbiosis. Monitors nitric oxide (NO) levels during early phase of the nitrogen-fixing symbiosis and buffers oxygen in functioning nodules. May not function as an oxygen storage or transport protein. Has an unusually high affinity for O(2) through a hexacoordinate heme iron because of a very low dissociation constant. This is Anaerobic nitrite reductase MHB1 from Medicago sativa (Alfalfa).